A 3096-amino-acid polypeptide reads, in one-letter code: MAAQGSPSSSPSDDSTTSGSLPELPPTSTATSRSPPESKGSSRSSLLQWTCPEDSLPLAVFYGPLDAKNPLLASCEKEIQELLGFMRKKKALATTEEEKHEFRRRCATSLFNIWTKYAPRLPADYYNEKLLKVGDSLCQMKEYKLALLQCYGRYLQQFNTNFDENKVDVTQFKATFFPKGFKDKTAGLTFHALSGKNMCNYQLVCDSDENLKNKESVVQCLHILSSLRLIMQVALPQEHLCWIIFNGTIYIYTICRKLMVIGQSSKALEYLLWASMCMESLVPLLSLRYLTWRATLYTAVCQCCYDCHAGIHGEAFARRALAKIDELRQLELMSSSKSQEESRRYFREATMKMAVMIFKRGVFESRRKNKAVFRPKIRINLREVQTLSWPRTVTERLLDEMFDSTASQFLAVLEALSDSNRRILQTGPIVTDEVEIHDVVSELFMAGKELLIMSNIGADGMLDFPKTSLLELMIGRKDVISVDAAVKFIKLAFTYEEWSLFESSAVHLIYFLQRQDDPESKKAEKDLTLLIAMEPLINVKRNKGLIFPLENYKEGQSTQIYLKKIAVHDTCLKTCGYSEDIFHLAATLYVCVCTAPQDVQPDKEIVVDTIMFLWQKCKLGIQRLNISRNDYAKFTQKISTNKWIYLLWQINEVIHCYKMEDIDIVVVAEVTLRLSEILESLGSPGRKFKQSLDVPLREGTNKFPGAPKGITEILPILQKNPVEQLLFAYKLLDRAIGGINLNCMLTSLPNGSSVIDHCYAKRTHHIDGDTYKPLASNSFMMDLHLELIQAQHRIAVVLLDKLQVLQTPTVSKDISTKGPEKLKQSGSTDCFTELNIMNKIKKNTLSKAIYLMQKALLIFEKDATSTSSWELLMEAYSLIQRIEAEQNALYSYQKYLESSKRKKSRVPPPPILLSRTHCSVTLKPAPFTSEVKVSWYCILGCKAEGSYGKVRLNNNHLPNSGEAIPADGKSVFEVKGLETNEKYVFAVAAYSNNGKLVGGAIGETTKPILVYPPLSTITARMFLTQVAYQVGNYELAKKVFSPVWDYFVASPLQDEQSVICLSNIITITQRRLHSDILAETSSILLYLFLRNIFVTSDIKIKEENLFCDNIKGNEIFPSQQIARLIECERVLVALELSNFLNDSSYALQAVTQCYGLLAPIIYHNIVLVPVVQILIKCIVVLQGLPSIVCSKKHTASFESIQHMIACCIFYITKILRSWREYDLAVMIINYGKKMLDITPGCKSLFDGSNEQEEMPEEDSSKKSLKTKKPQQILLPEKINEQLALLETHLLKLTKQYVTSELSGGEDPIFLYPVVLNWSVKGAVKEVMKFKQKPRFLEFFTQVMLKCMNEEKFHLMVEVTTPVHDFLKRRNESLLGLIKVKYKDSALNKKANKSLKFKAAVMEIGRSAEMQQRIRSKKKETLRDFIFKNPAISEMVAHERNRRTSVRKAAQRYLMDYLNPLILSYVKRKRFHRLSLEEMPWRAQMNLYLAGAHFNLVLQKLWECTKMKFGTSHMMVSFRSCDPNMFSLYNSGTVLPTRKLTVENYKAMLDFLLTAKKRKANLPSDAEEFSTFINSIMSDENMSKTQTVYDSDSQSGSSAKEKDRGANLCVMDHFMKIFLYCRRAMVLAHRGGYWTLLQNCCRALWNFTQELQILLKQAVDLDKTFPISQDGFLCTSVLPFYLGAELLIDMLIQLQNTSSIKPIEDKGEFSVPSCYGNIKNDNGGSSLTFEHPLDDVNVVDLKWIHDFVLKSLEVLYQVEKWETLVSLAIQFNTVSHERYTEQVTPLLVYAQRQLLLRIQKFKGPDITQQPCARYEAEYGEKITCRNFIGKQLKINSSTIEATSNCTDLLKMLISSEYSRAKALVCVPVDVTDTLRCFRETLEKSKYHNRSIRHSRKLLSLFLAQTQDVLQASNQRSLKVQALHSLGSLLIFAEKKRAAFKCWCQALDDIFRKPDVLHTWKEFGPSLTNVTNSHSPPGFKDYSEEFLSRVGIWGCLQGAVISAKIAQFIKSLNVEKKTDCCILSALLFQGLLRTTLPHPKAERCYAQYEITQLLPGIELFSDRYRADICSVIASLYYIIRELHFVRQNLIVLPLLALYQYFVSGICQDITRNLEARILKIEVLIDLRFFSEAFYEISQIFYGKNMPCPIPAGYKATGKMKIFQSFDSGKLLTSKENIQAIDELRNKGLPAVLVTIGQPHLLNKFNFVKAYFFLSVAATINCVPENKFKTVITNKSKPNLPNLEEIYSKDDGSSFYNLTKLKDEITLSMLKSMLLMEAEDRLNFLLSEVEQKTLSQCSAGELEIVVEARLQLAAVALQRHRAAYSAAIVFSTLTLLQDSKLFEKKVVQDDTENPVSPGTSVTENKDDSEFLDPISLNAREYFNIHLWLRCRLALVTAFVAQIHGIGIVKEDDMTDCLSLINEVCMEAKSAGDTELQAEFLTQAVILGLQEKHLKADIMTNLQDIIHLLEGNEFISPQSRLTLARSLVLLDDLTKAEKFKESPSSKTGKLNLLTRAHSILTEQMLAFGETIEFRSSNTKYANPLQPLKNIYLPHVMLLAKIKMRIGHTVAKQVYYKNKRKDPSKWLPALHLFDVALKLCRTTAVEEHEVEAEILFQKGKIERQILMEEKSPSFQLESLYEAIQLSLKNDQNSGLIRDSYLEMALLYFHLKKPKIKISGSPLTLKPPLRRSSSVKETSANKFEMYSSLAWIAIRAAAQVSEAVLAINLLIGKKNTRMHKVNQVALPNIPEFAALDLLSSYTDYLLDNYQVLFQTSCTFLYQNDDVCDSADGRKKTQTKVDITWILLLRYYIHLQRINNLSKLLASATPVSGISLPDDTLLTSLYNSELILRQKEVHFFLKKFLQLYSSSCIDEFPKELLCQLENPPLSEKDLRESSAKLYRDSSVQSILSFKPVSGSSCVDITPIEMVTQASNKELCFQWYIPPLDRPPKETEPMVLLLYAYNLKPLKISDVRHSTYNSTCVGSLWIPLNRVIAIHEKLSNLAQIAELSLPAAPEITSNENIYEVEVEEESVDNEMEDMIIQCCSEIASLFLNDKEPTPLSEVPFDISLPSIFNLERLFDLANGCILSGGSLFNWIVSIIP.

The segment covering 1–45 (MAAQGSPSSSPSDDSTTSGSLPELPPTSTATSRSPPESKGSSRSS) has biased composition (low complexity). 2 disordered regions span residues 1 to 46 (MAAQ…RSSL) and 1248 to 1267 (SNEQ…LKTK).

Belongs to the CFAP54 family.

The protein resides in the cytoplasm. Its subcellular location is the cytoskeleton. It is found in the cilium axoneme. Required for assembly and function of cilia and flagella. This is Cilia- and flagella-associated protein 54 from Homo sapiens (Human).